Here is a 170-residue protein sequence, read N- to C-terminus: Peptide deformylase (170 aa).

Cysteine 94 and histidine 136 together coordinate Fe cation. Glutamate 137 is a catalytic residue. Residue histidine 140 participates in Fe cation binding.

The protein belongs to the polypeptide deformylase family. It depends on Fe(2+) as a cofactor.

The catalysed reaction is N-terminal N-formyl-L-methionyl-[peptide] + H2O = N-terminal L-methionyl-[peptide] + formate. In terms of biological role, removes the formyl group from the N-terminal Met of newly synthesized proteins. Requires at least a dipeptide for an efficient rate of reaction. N-terminal L-methionine is a prerequisite for activity but the enzyme has broad specificity at other positions. In Agrobacterium fabrum (strain C58 / ATCC 33970) (Agrobacterium tumefaciens (strain C58)), this protein is Peptide deformylase.